The chain runs to 261 residues: Chanoclavine-I dehydrogenase easD (261 aa).

An N-terminal signal peptide occupies residues 1–20; it reads MPSMTSKVFAITGGASGIGA. Residue isoleucine 18 coordinates NADP(+). Asparagine 43 carries N-linked (GlcNAc...) asparagine glycosylation. NADP(+) is bound by residues aspartate 66, arginine 132, tyrosine 166, lysine 170, and threonine 201. Tyrosine 166 serves as the catalytic Proton donor. Lysine 170 functions as the Lowers pKa of active site Tyr in the catalytic mechanism.

The protein belongs to the short-chain dehydrogenases/reductases (SDR) family. In terms of assembly, homotetramer.

It catalyses the reaction chanoclavine-I + NAD(+) = chanoclavine-I aldehyde + NADH + H(+). It participates in alkaloid biosynthesis; ergot alkaloid biosynthesis. Functionally, chanoclavine-I dehydrogenase; part of the gene cluster that mediates the biosynthesis of fungal ergot alkaloid. DmaW catalyzes the first step of ergot alkaloid biosynthesis by condensing dimethylallyl diphosphate (DMAP) and tryptophan to form 4-dimethylallyl-L-tryptophan. The second step is catalyzed by the methyltransferase easF that methylates 4-dimethylallyl-L-tryptophan in the presence of S-adenosyl-L-methionine, resulting in the formation of 4-dimethylallyl-L-abrine. The catalase easC and the FAD-dependent oxidoreductase easE then transform 4-dimethylallyl-L-abrine to chanoclavine-I which is further oxidized by easD in the presence of NAD(+), resulting in the formation of chanoclavine-I aldehyde. Agroclavine dehydrogenase easG then mediates the conversion of chanoclavine-I aldehyde to agroclavine via a non-enzymatic adduct reaction: the substrate is an iminium intermediate that is formed spontaneously from chanoclavine-I aldehyde in the presence of glutathione. The presence of easA is not required to complete this reaction. Further conversion of agroclavine to paspalic acid is a two-step process involving oxidation of agroclavine to elymoclavine and of elymoclavine to paspalic acid, the second step being performed by the elymoclavine oxidase cloA. Paspalic acid is then further converted to D-lysergic acid. Ergopeptines are assembled from D-lysergic acid and three different amino acids by the D-lysergyl-peptide-synthetases composed each of a monomudular and a trimodular nonribosomal peptide synthetase subunit. LpsB and lpsC encode the monomodular subunits responsible for D-lysergic acid activation and incorporation into the ergopeptine backbone. LpsA1 and A2 subunits encode the trimodular nonribosomal peptide synthetase assembling the tripeptide portion of ergopeptines. LpsA1 is responsible for formation of the major ergopeptine, ergotamine, and lpsA2 for alpha-ergocryptine, the minor ergopeptine of the total alkaloid mixture elaborated by C.purpurea. D-lysergyl-tripeptides are assembled by the nonribosomal peptide synthetases and released as N-(D-lysergyl-aminoacyl)-lactams. Cyclolization of the D-lysergyl-tripeptides is performed by the Fe(2+)/2-ketoglutarate-dependent dioxygenase easH which introduces a hydroxyl group into N-(D-lysergyl-aminoacyl)-lactam at alpha-C of the aminoacyl residue followed by spontaneous condensation with the terminal lactam carbonyl group. In Claviceps purpurea (strain 20.1) (Ergot fungus), this protein is Chanoclavine-I dehydrogenase easD.